The sequence spans 310 residues: tRNA dimethylallyltransferase (310 aa).

24 to 31 (GPTASGKT) contacts ATP. 26–31 (TASGKT) contributes to the substrate binding site. Residues 49-52 (DSRQ) form an interaction with substrate tRNA region.

It belongs to the IPP transferase family. As to quaternary structure, monomer. Mg(2+) serves as cofactor.

It catalyses the reaction adenosine(37) in tRNA + dimethylallyl diphosphate = N(6)-dimethylallyladenosine(37) in tRNA + diphosphate. In terms of biological role, catalyzes the transfer of a dimethylallyl group onto the adenine at position 37 in tRNAs that read codons beginning with uridine, leading to the formation of N6-(dimethylallyl)adenosine (i(6)A). The sequence is that of tRNA dimethylallyltransferase from Synechococcus sp. (strain WH7803).